Reading from the N-terminus, the 343-residue chain is S-adenosylmethionine:tRNA ribosyltransferase-isomerase (343 aa).

This sequence belongs to the QueA family. In terms of assembly, monomer.

The protein localises to the cytoplasm. The enzyme catalyses 7-aminomethyl-7-carbaguanosine(34) in tRNA + S-adenosyl-L-methionine = epoxyqueuosine(34) in tRNA + adenine + L-methionine + 2 H(+). It participates in tRNA modification; tRNA-queuosine biosynthesis. Functionally, transfers and isomerizes the ribose moiety from AdoMet to the 7-aminomethyl group of 7-deazaguanine (preQ1-tRNA) to give epoxyqueuosine (oQ-tRNA). This is S-adenosylmethionine:tRNA ribosyltransferase-isomerase from Dehalococcoides mccartyi (strain ATCC BAA-2100 / JCM 16839 / KCTC 5957 / BAV1).